A 707-amino-acid chain; its full sequence is Matrix metalloproteinase-9 (707 aa).

An N-terminal signal peptide occupies residues 1-19 (MSLWQPLVLVLLVLGCCFA). Positions 20-93 (APRQRQSTLV…GELDSATLKA (74 aa)) are cleaved as a propeptide — activation peptide. N-linked (GlcNAc...) asparagine glycosylation occurs at N38. Positions 97–104 (PRCGVPDL) match the Cysteine switch motif. Residue C99 participates in Zn(2+) binding. N120 and N127 each carry an N-linked (GlcNAc...) asparagine glycan. D131 and D165 together coordinate Ca(2+). Residues H175 and D177 each coordinate Zn(2+). Residues D182, G183, D185, and L187 each coordinate Ca(2+). H190 provides a ligand contact to Zn(2+). Residues G197, Q199, and D201 each contribute to the Ca(2+) site. A Zn(2+)-binding site is contributed by H203. Residues D205, D206, and E208 each coordinate Ca(2+). 3 consecutive Fibronectin type-II domains span residues 225–273 (ADGA…FCPS), 283–331 (ADGK…FCPT), and 342–390 (SAGE…FCPD). 6 disulfide bridges follow: C230–C256, C244–C271, C288–C314, C302–C329, C347–C373, and C361–C388. H401 is a Zn(2+) binding site. E402 is a catalytic residue. H405 and H411 together coordinate Zn(2+). Positions 431-508 (LHKDDVNGIR…AGPSTATTVP (78 aa)) are disordered. Pro residues-rich tracts occupy residues 452–475 (RPPT…PPTV) and 486–499 (TGPP…PPTA). A disulfide bond links C516 and C704. Hemopexin repeat units lie at residues 518-563 (VNIF…WPAL), 564-608 (PRKL…GLGA), 610-657 (VAQV…FPGV), and 658-704 (PLDT…ILQC).

The protein belongs to the peptidase M10A family. In terms of assembly, exists as monomer or homodimer; disulfide-linked. Also exists as heterodimer with LCN2. Macrophages and transformed cell lines produce only the monomeric form. Interacts with ECM1. (Microbial infection) Interacts with Staphylococcus aureus protein SSL5; this interaction inhibits MMP9 activity. Requires Zn(2+) as cofactor. Ca(2+) serves as cofactor. Processing of the precursor yields different active forms of 64, 67 and 82 kDa. Sequentially processing by MMP3 yields the 82 kDa matrix metalloproteinase-9. Post-translationally, N- and O-glycosylated. In terms of tissue distribution, detected in neutrophils (at protein level). Produced by normal alveolar macrophages and granulocytes.

It localises to the secreted. It is found in the extracellular space. The protein resides in the extracellular matrix. The enzyme catalyses Cleavage of gelatin types I and V and collagen types IV and V.. Inhibited by histatin-3 1/24 (histatin-5). Inhibited by ECM1. Matrix metalloproteinase that plays an essential role in local proteolysis of the extracellular matrix and in leukocyte migration. Could play a role in bone osteoclastic resorption. Cleaves KiSS1 at a Gly-|-Leu bond. Cleaves NINJ1 to generate the Secreted ninjurin-1 form. Cleaves type IV and type V collagen into large C-terminal three quarter fragments and shorter N-terminal one quarter fragments. Degrades fibronectin but not laminin or Pz-peptide. This Homo sapiens (Human) protein is Matrix metalloproteinase-9 (MMP9).